The following is a 638-amino-acid chain: Neuroendocrine convertase 2 (638 aa).

The N-terminal stretch at 1 to 25 is a signal peptide; that stretch reads MKGGCVSQWKAAAGFLFCVMVFASA. A propeptide spanning residues 26–109 is cleaved from the precursor; sequence ERPVFTNHFL…QQEGFDRKKR (84 aa). Positions 129-453 constitute a Peptidase S8 domain; the sequence is QWYLINTGQA…YGVLDAGAMV (325 aa). Active-site charge relay system residues include aspartate 167 and histidine 208. Cystine bridges form between cysteine 225/cysteine 376 and cysteine 317/cysteine 347. Asparagine 375 is a glycosylation site (N-linked (GlcNAc...) asparagine). Serine 384 serves as the catalytic Charge relay system. A P/Homo B domain is found at 461–597; that stretch reads TVPERFHCVG…TLMLHGTQSA (137 aa). Cysteine 468 and cysteine 494 are joined by a disulfide. Residues asparagine 514 and asparagine 524 are each glycosylated (N-linked (GlcNAc...) asparagine).

This sequence belongs to the peptidase S8 family. Furin subfamily.

It localises to the cytoplasmic vesicle. The protein resides in the secretory vesicle. It is found in the secreted. It carries out the reaction Release of protein hormones and neuropeptides from their precursors, generally by hydrolysis of -Lys-Arg-|- bonds.. Its function is as follows. Serine endopeptidase which is involved in the processing of hormone and other protein precursors at sites comprised of pairs of basic amino acid residues. Responsible for the release of glucagon from proglucagon in pancreatic A cells. This chain is Neuroendocrine convertase 2 (PCSK2), found in Homo sapiens (Human).